Reading from the N-terminus, the 219-residue chain is Chalcone--flavanone isomerase (219 aa).

Substrate is bound by residues Thr-50, Asn-115, and Ser-192.

The protein belongs to the chalcone isomerase family.

It catalyses the reaction a chalcone = a flavanone.. It participates in secondary metabolite biosynthesis; flavonoid biosynthesis. Functionally, catalyzes the intramolecular cyclization of bicyclic chalcones into tricyclic (S)-flavanones. Responsible for the isomerization of 4,2',4',6'-tetrahydroxychalcone (also termed chalcone) into naringenin. The chain is Chalcone--flavanone isomerase (CHI) from Pyrus communis (Pear).